The primary structure comprises 552 residues: E3 ubiquitin-protein ligase MGRN1 (552 aa).

Gly2 carries the N-myristoyl glycine lipid modification. An RING-type zinc finger spans residues 278–317 (CVVCLSDLRDTLILPCRHLCLCTSCADTLRYQANNCPICR). The interval 355–384 (SCPFKKSKPHPASLASKKPKRETNSDSVPP) is disordered. A Required for TSG101-binding motif is present at residues 406 to 409 (PSAP). Tyr411 carries the post-translational modification Phosphotyrosine. A disordered region spans residues 439–552 (SSRQKGRPQS…PDSCSVGIDE (114 aa)). Positions 450 to 460 (APDSTLRSPSS) are enriched in polar residues. The span at 464 to 475 (EEDEEKLSEDVD) shows a compositional bias: acidic residues. Ser471 is subject to Phosphoserine. Polar residues predominate over residues 504–523 (SSSPQQGTRAASIENVLQDS). At Ser524 the chain carries Phosphoserine.

In terms of assembly, interacts with MC1R and MC4R, but not with TBXA2R. Interacts with TSG101. Interacts with mislocalized cytosolically exposed PRNP; this interaction alters MGRN1 subcellular location and causes lysosomal enlargement. Autoubiquitinated in vitro.

The protein localises to the early endosome. It is found in the cytoplasm. Its subcellular location is the cytosol. The protein resides in the nucleus. It localises to the cell membrane. It catalyses the reaction S-ubiquitinyl-[E2 ubiquitin-conjugating enzyme]-L-cysteine + [acceptor protein]-L-lysine = [E2 ubiquitin-conjugating enzyme]-L-cysteine + N(6)-ubiquitinyl-[acceptor protein]-L-lysine.. Its pathway is protein modification; protein ubiquitination. E3 ubiquitin-protein ligase. Mediates monoubiquitination at multiple sites of TSG101 in the presence of UBE2D1, but not of UBE2G1, nor UBE2H. Plays a role in the regulation of endosome-to-lysosome trafficking. Impairs MC1R- and MC4R-signaling by competing with GNAS-binding to MCRs and inhibiting agonist-induced cAMP production. Does not inhibit ADRB2-signaling. Does not promote MC1R ubiquitination. Acts also as a negative regulator of hedgehog signaling. This Homo sapiens (Human) protein is E3 ubiquitin-protein ligase MGRN1 (MGRN1).